The sequence spans 266 residues: Undecaprenyl-diphosphatase (266 aa).

A run of 7 helical transmembrane segments spans residues 41–61 (NLAF…VILW), 82–102 (YVIN…FFKD), 106–126 (AIFG…AALL), 140–160 (ISMK…LPGL), 180–200 (LAQF…LLDG), 213–233 (IPTL…CLAC), and 245–265 (LIYF…VSQL).

It belongs to the UppP family.

It localises to the cell inner membrane. The catalysed reaction is di-trans,octa-cis-undecaprenyl diphosphate + H2O = di-trans,octa-cis-undecaprenyl phosphate + phosphate + H(+). In terms of biological role, catalyzes the dephosphorylation of undecaprenyl diphosphate (UPP). Confers resistance to bacitracin. The chain is Undecaprenyl-diphosphatase from Bacteroides fragilis (strain ATCC 25285 / DSM 2151 / CCUG 4856 / JCM 11019 / LMG 10263 / NCTC 9343 / Onslow / VPI 2553 / EN-2).